A 239-amino-acid chain; its full sequence is Large ribosomal subunit protein uL3 (239 aa).

2 disordered regions span residues 140-164 (SHRS…KMPG) and 211-239 (PLPK…QEGA). At Q151 the chain carries N5-methylglutamine.

This sequence belongs to the universal ribosomal protein uL3 family. As to quaternary structure, part of the 50S ribosomal subunit. Forms a cluster with proteins L14 and L19. Methylated by PrmB.

In terms of biological role, one of the primary rRNA binding proteins, it binds directly near the 3'-end of the 23S rRNA, where it nucleates assembly of the 50S subunit. In Bradyrhizobium sp. (strain ORS 278), this protein is Large ribosomal subunit protein uL3.